The following is a 103-amino-acid chain: Large ribosomal subunit protein bL21 (103 aa).

The protein belongs to the bacterial ribosomal protein bL21 family. Part of the 50S ribosomal subunit. Contacts protein L20.

This protein binds to 23S rRNA in the presence of protein L20. The sequence is that of Large ribosomal subunit protein bL21 from Azotobacter vinelandii (strain DJ / ATCC BAA-1303).